The following is a 278-amino-acid chain: Ras-related protein Rab-40A-like (278 aa).

Gly26, Lys27, and Ser28 together coordinate GTP. A Mg(2+)-binding site is contributed by Ser28. Positions 41–49 are switch-I; the sequence is SPYSHLGGI. Asp69 contributes to the Mg(2+) binding site. Positions 72, 126, and 127 each coordinate GTP. The interval 72–88 is switch-II; it reads GQGRFCTIFRSYSRGAQ. Residues 175–228 form the SOCS box domain; sequence LLRHRLNWLGRPSKVLSLQDLCCRTIVSCTPVHLVDKLPLPIALRSHLKSFSMA. Cys270 carries the S-palmitoyl cysteine lipid modification. Cys275 is lipidated: S-geranylgeranyl cysteine.

This sequence belongs to the small GTPase superfamily. Rab family. Mg(2+) serves as cofactor. As to expression, expressed in brain, lung, heart, skeletal muscle, kidney and liver. Highest expression in brain. Expressed in fetal brain and kidney.

It is found in the membrane. The protein resides in the cytoplasm. The protein localises to the mitochondrion. The enzyme catalyses GTP + H2O = GDP + phosphate + H(+). The protein operates within protein modification; protein ubiquitination. Regulated by guanine nucleotide exchange factors (GEFs) which promote the exchange of bound GDP for free GTP. Regulated by GTPase activating proteins (GAPs) which increase the GTP hydrolysis activity. Inhibited by GDP dissociation inhibitors (GDIs). Functionally, may act as substrate-recognition component of the ECS(RAB40) E3 ubiquitin ligase complex which mediates the ubiquitination and subsequent proteasomal degradation of target proteins. The Rab40 subfamily belongs to the Rab family that are key regulators of intracellular membrane trafficking, from the formation of transport vesicles to their fusion with membranes. Rabs cycle between an inactive GDP-bound form and an active GTP-bound form that is able to recruit to membranes different sets of downstream effectors directly responsible for vesicle formation, movement, tethering and fusion. The polypeptide is Ras-related protein Rab-40A-like (Homo sapiens (Human)).